The primary structure comprises 169 residues: uncharacterized protein (169 aa).

A helical membrane pass occupies residues 55–77 (SLFIFKAVMILHTCLIVKSIRIF).

The protein localises to the membrane. This is an uncharacterized protein from Saccharomyces cerevisiae (strain ATCC 204508 / S288c) (Baker's yeast).